Here is a 327-residue protein sequence, read N- to C-terminus: Phenylalanine--tRNA ligase alpha subunit (327 aa).

Residue glutamate 252 participates in Mg(2+) binding.

This sequence belongs to the class-II aminoacyl-tRNA synthetase family. Phe-tRNA synthetase alpha subunit type 1 subfamily. In terms of assembly, tetramer of two alpha and two beta subunits. It depends on Mg(2+) as a cofactor.

The protein localises to the cytoplasm. The enzyme catalyses tRNA(Phe) + L-phenylalanine + ATP = L-phenylalanyl-tRNA(Phe) + AMP + diphosphate + H(+). The sequence is that of Phenylalanine--tRNA ligase alpha subunit from Salmonella newport (strain SL254).